We begin with the raw amino-acid sequence, 427 residues long: Thyroid hormone receptor alpha-A (427 aa).

A compositionally biased stretch (basic and acidic residues) spans methionine 1 to proline 11. The segment at methionine 1–serine 40 is disordered. The tract at residues methionine 1 to proline 56 is modulating. Residues serine 29–serine 40 show a composition bias toward polar residues. 2 NR C4-type zinc fingers span residues cysteine 57–cysteine 77 and cysteine 95–cysteine 119. Positions cysteine 57–aspartate 131 form a DNA-binding region, nuclear receptor. Positions serine 167–aspartate 410 constitute an NR LBD domain.

It belongs to the nuclear hormone receptor family. NR1 subfamily. As to quaternary structure, interacts with ncoa2. As to expression, after the mid-blastula transition (MBT), expressed throughout the deep cells, which give rise to the embryo proper. In adults, isoform 2 shows highest expression in the eye and liver. Expressed in adult gonads.

It is found in the nucleus. Functionally, high affinity receptor for triiodothyronine. In the absence of thyroid hormone during late blastula stage development, acts as a transcriptional repressor. Whereas in the presence of thyroid hormone, can act as an activator of transcription. In addition, represses retinoic acid (RA)-signaling during blastula and gastrula stages of development. This is Thyroid hormone receptor alpha-A (thraa) from Danio rerio (Zebrafish).